The primary structure comprises 174 residues: Large ribosomal subunit protein uL15 (174 aa).

Disordered stretches follow at residues 1–56 (MKLH…GQMR) and 150–174 (VERR…TPGA). Residues 21 to 35 (RGIGSGKGKTGGKGM) are compositionally biased toward gly residues.

The protein belongs to the universal ribosomal protein uL15 family. As to quaternary structure, part of the 50S ribosomal subunit.

Binds to the 23S rRNA. The polypeptide is Large ribosomal subunit protein uL15 (Roseiflexus castenholzii (strain DSM 13941 / HLO8)).